Consider the following 225-residue polypeptide: KDP operon transcriptional regulatory protein KdpE (225 aa).

The 114-residue stretch at 3 to 116 folds into the Response regulatory domain; the sequence is NVLIVEDEQA…ELQARLRVAL (114 aa). D52 is modified (4-aspartylphosphate). A DNA-binding region (ompR/PhoB-type) is located at residues 126–225; it reads DPLVKFSDVT…ETGIGYRFML (100 aa).

Phosphorylated by KdpD.

It is found in the cytoplasm. Its function is as follows. Member of the two-component regulatory system KdpD/KdpE involved in the regulation of the kdp operon. The chain is KDP operon transcriptional regulatory protein KdpE (kdpE) from Escherichia coli (strain K12).